The sequence spans 233 residues: Membrane glycoprotein UL9 (233 aa).

The first 20 residues, 1–20, serve as a signal peptide directing secretion; it reads MSKRLQVFPWITILFYTSKS. 5 N-linked (GlcNAc...) asparagine; by host glycosylation sites follow: Asn-40, Asn-94, Asn-101, Asn-131, and Asn-169. Residues 194-214 form a helical membrane-spanning segment; it reads MWIIPLVIVITIIVLICFKFP.

The protein belongs to the HHV-5 UL9 family.

The protein resides in the host membrane. This chain is Membrane glycoprotein UL9 (UL9), found in Homo sapiens (Human).